The following is a 419-amino-acid chain: Acyl-[acyl-carrier-protein] hydrolase FATB1, chloroplastic (419 aa).

Residues 1-50 (MVAAAATSAFFPVPAPGTSPKPGKSGNWPSSLSPTFKPKSIPNGGFQVKA) constitute a chloroplast transit peptide. Residues 1 to 84 (MVAAAATSAF…DTSSSPPPRA (84 aa)) form a disordered region. The segment covering 61-78 (SAVNLKSGSLNTQEDTSS) has biased composition (polar residues). Residues Asn-315, His-317, and Cys-352 contribute to the active site. Residues 390–419 (SRTEWRPKNAGTNGAISTSTAKTSNGNSVS) are disordered. The span at 399–419 (AGTNGAISTSTAKTSNGNSVS) shows a compositional bias: polar residues.

The protein belongs to the acyl-ACP thioesterase family.

The protein resides in the plastid. Its subcellular location is the chloroplast. It catalyses the reaction octanoyl-[ACP] + H2O = octanoate + holo-[ACP] + H(+). The enzyme catalyses decanoyl-[ACP] + H2O = decanoate + holo-[ACP] + H(+). Its function is as follows. Plays an essential role in chain termination during de novo fatty acid synthesis. Possesses thioesterase activity for short chain acyl-ACPs. Substrate preference is 8:0 &gt; 10:0. In Cuphea viscosissima (Blue waxweed), this protein is Acyl-[acyl-carrier-protein] hydrolase FATB1, chloroplastic.